The following is a 359-amino-acid chain: Peptide chain release factor 1 (359 aa).

Gln234 carries the post-translational modification N5-methylglutamine. Residues 283 to 305 (SQKDAARAADRRAQVGSGDRSER) are disordered.

The protein belongs to the prokaryotic/mitochondrial release factor family. Post-translationally, methylated by PrmC. Methylation increases the termination efficiency of RF1.

The protein localises to the cytoplasm. Its function is as follows. Peptide chain release factor 1 directs the termination of translation in response to the peptide chain termination codons UAG and UAA. This chain is Peptide chain release factor 1, found in Methylobacterium sp. (strain 4-46).